The following is a 423-amino-acid chain: F-box/LRR-repeat protein 2 (423 aa).

The F-box domain occupies 9–55 (GLINKKLPKELLLRIFSFLDIVTLCRCAQISKAWNILALDGSNWQRV). LRR repeat units lie at residues 61–87 (QTDV…SLRG), 88–113 (CIGV…NLNG), 114–139 (CTKI…DLTS), 140–165 (CVSV…NLSW), 166–191 (CDQI…LLRG), 192–217 (CTQL…NLQS), 218–243 (CSRI…CLSG), 244–269 (CSNL…EAAR), 270–295 (CSHL…DLEE), 296–321 (CVLI…SLSH), 322–350 (CELI…ELDN), 351–375 (CLLV…ELYD), and 376–401 (CQQV…AYFA). An interaction with Calmodulin region spans residues 80–90 (LRKLSLRGCIG). Lys201 is covalently cross-linked (Glycyl lysine isopeptide (Lys-Gly) (interchain with G-Cter in ubiquitin)). Thr404 carries the phosphothreonine; by GSK3-beta modification. Cys420 carries S-geranylgeranyl cysteine lipidation. Positions 420–423 (CVIL) match the CAAX motif motif.

In terms of assembly, part of the SCF (SKP1-CUL1-F-box) E3 ubiquitin-protein ligase complex SCF(FBXL2) composed of CUL1, SKP1, RBX1 and FBXL2. Interacts with calmodulin; may antagonize substrate ubiquitination by SCF(FBXL2). May interact with PIK3R1. Interacts with PTPN13. In terms of processing, phosphorylated by GSK-beta (GSK3B), promoting recognition by FBXO3, leading to its ubiquitination by the SCF(FBXO3) complex. Post-translationally, ubiquitinated at Lys-201 by the SCF(FBXO3) complex in response to lipopolysaccharide (LPS), leading to its degradation by the proteasome.

It localises to the membrane. It participates in protein modification; protein ubiquitination. Calcium-activated substrate recognition component of the SCF (SKP1-cullin-F-box protein) E3 ubiquitin-protein ligase complex, SCF(FBXL2), which mediates the ubiquitination and subsequent proteasomal degradation of target proteins. Unlike many F-box proteins, FBXL2 does not seem to target phosphodegron within its substrates but rather calmodulin-binding motifs and is thereby antagonized by calmodulin. This is the case for the cyclins CCND2 and CCND3 which polyubiquitination and subsequent degradation are inhibited by calmodulin. Through CCND2 and CCND3 degradation induces cell-cycle arrest in G(0). SCF(FBXL2) also mediates PIK3R2 ubiquitination and proteasomal degradation thereby regulating phosphatidylinositol 3-kinase signaling and autophagy. PCYT1A monoubiquitination by SCF(FBXL2) and subsequent degradation regulates synthesis of phosphatidylcholine, which is utilized for formation of membranes and of pulmonary surfactant. The SCF(FBXL2) complex acts as a regulator of inflammation by mediating ubiquitination and degradation of TRAF proteins (TRAF1, TRAF2, TRAF3, TRAF4, TRAF5 and TRAF6). The SCF(FBXL2) complex acts as a negative regulator of the NLRP3 inflammasome by mediating ubiquitination and degradation of NLRP3. The polypeptide is F-box/LRR-repeat protein 2 (Mus musculus (Mouse)).